Reading from the N-terminus, the 332-residue chain is MNLITIERHILEQQKFFPEFTGELTDLLNDVAFAAKLVRREVVRAGLVDILGFTGDTNIQGEQVKKLDLFANDKIINAIGQHGRFAIMGSEENDGIIIPPKNETGSYALLFDPLDGSSNIDVNVSVGTIFSIYKLKGDDPGKASLNDCLQHGYEQVAAGYVIYGSSVVMVYTTGHGVHGFTYDPTIGEFLLSHENIVTPKSGKYYSINEGSYGQFNEGTKKYLDYIKEEDPATGRPYSTRYIGSLVADFHRNLLTGGIFVYPPTITHPNGKLRLMYEANPLAFICEQAGGRATNGKERILDLQPSELHQRTPLYIGSEADVMIAEEFEQGKR.

Positions 91, 112, 114, and 115 each coordinate Mg(2+). Residues 115–118, asparagine 208, tyrosine 241, and lysine 271 each bind substrate; that span reads DGSS. Glutamate 277 contacts Mg(2+).

Belongs to the FBPase class 1 family. In terms of assembly, homotetramer. The cofactor is Mg(2+).

It localises to the cytoplasm. The catalysed reaction is beta-D-fructose 1,6-bisphosphate + H2O = beta-D-fructose 6-phosphate + phosphate. Its pathway is carbohydrate biosynthesis; Calvin cycle. The polypeptide is Fructose-1,6-bisphosphatase class 1 (Chlorobium phaeobacteroides (strain DSM 266 / SMG 266 / 2430)).